The following is an 871-amino-acid chain: Valine--tRNA ligase (871 aa).

The 'HIGH' region signature appears at 47–57 (PNVTGRLHIGH). A 'KMSKS' region motif is present at residues 534-538 (KMSKS). K537 is a binding site for ATP. A coiled-coil region spans residues 805-871 (DLTPILNRLN…IEEELARLTR (67 aa)).

The protein belongs to the class-I aminoacyl-tRNA synthetase family. ValS type 1 subfamily. As to quaternary structure, monomer.

It is found in the cytoplasm. The catalysed reaction is tRNA(Val) + L-valine + ATP = L-valyl-tRNA(Val) + AMP + diphosphate. Its function is as follows. Catalyzes the attachment of valine to tRNA(Val). As ValRS can inadvertently accommodate and process structurally similar amino acids such as threonine, to avoid such errors, it has a 'posttransfer' editing activity that hydrolyzes mischarged Thr-tRNA(Val) in a tRNA-dependent manner. In Nitratiruptor sp. (strain SB155-2), this protein is Valine--tRNA ligase.